The following is a 221-amino-acid chain: Immediate early response gene 2 protein (221 aa).

Met-1 carries the N-acetylmethionine modification. Positions 54 to 156 (THQPEFPPSR…EGEATSEVSN (103 aa)) are disordered. Basic and acidic residues predominate over residues 64–77 (RALDPRLHPPREPE). Low complexity predominate over residues 125–136 (SDLSDGSDAGLV).

The protein belongs to the IER family.

The protein localises to the cytoplasm. Its subcellular location is the nucleus. In terms of biological role, DNA-binding protein that seems to act as a transcription factor. Involved in the regulation of neuronal differentiation, acts upon JNK-signaling pathway activation and plays a role in neurite outgrowth in hippocampal cells. May mediate with FIBP FGF-signaling in the establishment of laterality in the embryo. Promotes cell motility, seems to stimulate tumor metastasis. The sequence is that of Immediate early response gene 2 protein (Ier2) from Rattus norvegicus (Rat).